The following is a 30-amino-acid chain: Cycloviolin-D (30 aa).

The segment at residues 1–30 is a cross-link (cyclopeptide (Gly-Asn)); it reads GFPCGESCVFIPCISAAIGCSCKNKVCYRN. Intrachain disulfides connect C4–C20, C8–C22, and C13–C27.

This is a cyclic peptide.

In terms of biological role, probably participates in a plant defense mechanism. Has anti-HIV activity. The polypeptide is Cycloviolin-D (Leonia cymosa (Sacha uba)).